A 262-amino-acid chain; its full sequence is uncharacterized protein (262 aa).

A coiled-coil region spans residues 41 to 118 (ELQKNEKIDK…EEKAEDFINK (78 aa)).

This is an uncharacterized protein from Plasmodium falciparum (isolate 3D7).